A 571-amino-acid polypeptide reads, in one-letter code: Isocitrate dehydrogenase kinase/phosphatase (571 aa).

Residues 318–324 and lysine 339 contribute to the ATP site; that span reads APGVRGM. Aspartate 374 is an active-site residue.

The protein belongs to the AceK family.

It localises to the cytoplasm. The catalysed reaction is L-seryl-[isocitrate dehydrogenase] + ATP = O-phospho-L-seryl-[isocitrate dehydrogenase] + ADP + H(+). Functionally, bifunctional enzyme which can phosphorylate or dephosphorylate isocitrate dehydrogenase (IDH) on a specific serine residue. This is a regulatory mechanism which enables bacteria to bypass the Krebs cycle via the glyoxylate shunt in response to the source of carbon. When bacteria are grown on glucose, IDH is fully active and unphosphorylated, but when grown on acetate or ethanol, the activity of IDH declines drastically concomitant with its phosphorylation. The protein is Isocitrate dehydrogenase kinase/phosphatase of Pseudomonas putida (strain ATCC 700007 / DSM 6899 / JCM 31910 / BCRC 17059 / LMG 24140 / F1).